We begin with the raw amino-acid sequence, 267 residues long: Coiled-coil domain-containing protein 172 (267 aa).

Coiled-coil stretches lie at residues 24-97 (MREV…CEAI) and 128-191 (LMKE…EETE).

Belongs to the CCDC172 family. May interact with TEKT2.

The protein resides in the cytoplasm. It is found in the cell projection. It localises to the cilium. The protein is Coiled-coil domain-containing protein 172 (Ccdc172) of Mus musculus (Mouse).